A 252-amino-acid polypeptide reads, in one-letter code: MGRAGFVAGNWKMHGSLVRNQELLDAVVSGTRSLQNVSCVVCVPYPYIAQTQSVLEGSHVLWGGQNVSQYHHGAYTGEVSADMLADLGCRYVIVGHSERRTLFGEGNQVVAEKFRAAQERSITPILCVGETLAQRESDETEQVIAMQLDAVIDLAGIEALGQSVIAYEPVWAIGTGKTATPQQAQDVHKFIRSRIAVHSGGIAENIQILYGGSVKADNARELFTMPDIDGGLIGGASLVAAEFISICLAAQN.

Residue Asn-10–Lys-12 participates in substrate binding. Residue His-96 is the Electrophile of the active site. Glu-168 (proton acceptor) is an active-site residue. Substrate contacts are provided by residues Gly-174, Ser-213, and Gly-234–Gly-235.

This sequence belongs to the triosephosphate isomerase family. In terms of assembly, homodimer.

Its subcellular location is the cytoplasm. The catalysed reaction is D-glyceraldehyde 3-phosphate = dihydroxyacetone phosphate. It participates in carbohydrate biosynthesis; gluconeogenesis. The protein operates within carbohydrate degradation; glycolysis; D-glyceraldehyde 3-phosphate from glycerone phosphate: step 1/1. In terms of biological role, involved in the gluconeogenesis. Catalyzes stereospecifically the conversion of dihydroxyacetone phosphate (DHAP) to D-glyceraldehyde-3-phosphate (G3P). This Nitrosomonas europaea (strain ATCC 19718 / CIP 103999 / KCTC 2705 / NBRC 14298) protein is Triosephosphate isomerase.